A 421-amino-acid chain; its full sequence is 3-isopropylmalate dehydratase large subunit (421 aa).

Residues Cys-302, Cys-362, and Cys-365 each coordinate [4Fe-4S] cluster.

Belongs to the aconitase/IPM isomerase family. LeuC type 2 subfamily. As to quaternary structure, heterodimer of LeuC and LeuD. [4Fe-4S] cluster is required as a cofactor.

It carries out the reaction (2R,3S)-3-isopropylmalate = (2S)-2-isopropylmalate. It participates in amino-acid biosynthesis; L-leucine biosynthesis; L-leucine from 3-methyl-2-oxobutanoate: step 2/4. Catalyzes the isomerization between 2-isopropylmalate and 3-isopropylmalate, via the formation of 2-isopropylmaleate. In Campylobacter curvus (strain 525.92), this protein is 3-isopropylmalate dehydratase large subunit.